Reading from the N-terminus, the 210-residue chain is N-(5'-phosphoribosyl)anthranilate isomerase (210 aa).

Belongs to the TrpF family.

It carries out the reaction N-(5-phospho-beta-D-ribosyl)anthranilate = 1-(2-carboxyphenylamino)-1-deoxy-D-ribulose 5-phosphate. It participates in amino-acid biosynthesis; L-tryptophan biosynthesis; L-tryptophan from chorismate: step 3/5. The protein is N-(5'-phosphoribosyl)anthranilate isomerase of Crocosphaera subtropica (strain ATCC 51142 / BH68) (Cyanothece sp. (strain ATCC 51142)).